A 768-amino-acid polypeptide reads, in one-letter code: Integrin beta-8 (768 aa).

Positions Met1–Ser42 are cleaved as a signal peptide. The Extracellular portion of the chain corresponds to Glu43–Arg683. The region spanning Arg46–Pro95 is the PSI domain. 25 disulfides stabilise this stretch: Cys47/Cys65, Cys55/Cys469, Cys58/Cys83, Cys68/Cys94, Cys211/Cys218, Cys266/Cys307, Cys407/Cys419, Cys439/Cys467, Cys471/Cys491, Cys471/Cys494, Cys481/Cys494, Cys499/Cys528, Cys511/Cys526, Cys520/Cys531, Cys533/Cys546, Cys553/Cys567, Cys561/Cys572, Cys574/Cys583, Cys585/Cys609, Cys593/Cys607, Cys601/Cys612, Cys614/Cys624, Cys627/Cys630, Cys634/Cys661, and Cys640/Cys657. The region spanning Pro146 to Leu384 is the VWFA domain. Residues Asp154 and Ser156 each coordinate Mg(2+). Ca(2+) is bound at residue Asp193. N-linked (GlcNAc...) asparagine glycosylation is present at Asn233. Asn249, Asp251, Pro253, and Glu254 together coordinate Ca(2+). Position 254 (Glu254) interacts with Mg(2+). Asn402 carries an N-linked (GlcNAc...) asparagine glycan. Asn421, Asn431, and Asn456 each carry an N-linked (GlcNAc...) asparagine glycan. 4 consecutive I-EGF domains span residues Cys471–Gln495, Cys499–Glu547, Lys548–Gln584, and Cys585–Glu625. N-linked (GlcNAc...) asparagine glycosylation is present at Asn648. The chain crosses the membrane as a helical span at residues Ile684–Ile703. At Arg704–Phe768 the chain is on the cytoplasmic side.

This sequence belongs to the integrin beta chain family. In terms of assembly, heterodimer of an alpha and a beta subunit. Beta-8 (ITGB8) associates with alpha-V (ITGAV) to form ITGAV:ITGB8. ITGAV:ITGB8 interacts with TGFB1. As to expression, placenta, kidney, brain, ovary, uterus and in several transformed cells.

The protein resides in the cell membrane. Functionally, integrin alpha-V:beta-8 (ITGAV:ITGB8) is a receptor for fibronectin. It recognizes the sequence R-G-D in its ligands. Integrin alpha-V:beta-6 (ITGAV:ITGB6) mediates R-G-D-dependent release of transforming growth factor beta-1 (TGF-beta-1) from regulatory Latency-associated peptide (LAP), thereby playing a key role in TGF-beta-1 activation on the surface of activated regulatory T-cells (Tregs). Required during vasculogenesis. The polypeptide is Integrin beta-8 (ITGB8) (Oryctolagus cuniculus (Rabbit)).